Consider the following 126-residue polypeptide: Aspartate 1-decarboxylase (126 aa).

The active-site Schiff-base intermediate with substrate; via pyruvic acid is the S25. S25 carries the pyruvic acid (Ser) modification. T57 is a substrate binding site. Residue Y58 is the Proton donor of the active site. Residue 73 to 75 (GGA) participates in substrate binding.

It belongs to the PanD family. In terms of assembly, heterooctamer of four alpha and four beta subunits. It depends on pyruvate as a cofactor. In terms of processing, is synthesized initially as an inactive proenzyme, which is activated by self-cleavage at a specific serine bond to produce a beta-subunit with a hydroxyl group at its C-terminus and an alpha-subunit with a pyruvoyl group at its N-terminus.

Its subcellular location is the cytoplasm. It carries out the reaction L-aspartate + H(+) = beta-alanine + CO2. The protein operates within cofactor biosynthesis; (R)-pantothenate biosynthesis; beta-alanine from L-aspartate: step 1/1. Catalyzes the pyruvoyl-dependent decarboxylation of aspartate to produce beta-alanine. The protein is Aspartate 1-decarboxylase of Xylella fastidiosa (strain Temecula1 / ATCC 700964).